The primary structure comprises 445 residues: Phosphoglucosamine mutase (445 aa).

Residue Ser102 is the Phosphoserine intermediate of the active site. Mg(2+) contacts are provided by Ser102, Asp241, Asp243, and Asp245. At Ser102 the chain carries Phosphoserine.

Belongs to the phosphohexose mutase family. Mg(2+) serves as cofactor. Post-translationally, activated by phosphorylation.

It carries out the reaction alpha-D-glucosamine 1-phosphate = D-glucosamine 6-phosphate. Its function is as follows. Catalyzes the conversion of glucosamine-6-phosphate to glucosamine-1-phosphate. The sequence is that of Phosphoglucosamine mutase from Shigella dysenteriae serotype 1 (strain Sd197).